The primary structure comprises 170 residues: Thialysine N-epsilon-acetyltransferase (170 aa).

Residues 4 to 166 form the N-acetyltransferase domain; that stretch reads TRIREARESD…FRFEGEAMRE (163 aa). 27–28 is a substrate binding site; it reads FE. N6-acetyllysine is present on K29. E92 provides a ligand contact to substrate. Acetyl-CoA contacts are provided by residues 94-96, 102-107, 133-135, and Y140; these read IYV, GQGIGT, and NKK. Y140 functions as the Proton donor in the catalytic mechanism. Residue E152 participates in substrate binding.

This sequence belongs to the acetyltransferase family. In terms of assembly, homodimer.

The protein localises to the cytoplasm. It catalyses the reaction S-(2-aminoethyl)-L-cysteine + acetyl-CoA = S-(2-acetamidoethyl)-L-cysteine + CoA + H(+). The enzyme catalyses an alkane-alpha,omega-diamine + acetyl-CoA = an N-acetylalkane-alpha,omega-diamine + CoA + H(+). Its function is as follows. Catalyzes the N-acetylation of the amino acid thialysine (S-(2-aminoethyl)-L-cysteine), a L-lysine analog with the 4-methylene group substituted with a sulfur. May also catalyze acetylation of polyamines, such as norspermidine, spermidine or spermine. However, ability to acetylate polyamines is weak, suggesting that it does not act as a diamine acetyltransferase in vivo. The protein is Thialysine N-epsilon-acetyltransferase of Mus musculus (Mouse).